The sequence spans 61 residues: Metallothionein-2 (61 aa).

Met1 is subject to N-acetylmethionine. The segment at 1–29 (MDPNCSCATDGSCSCAGSCKCKECKCTTC) is beta. Positions 5, 7, 13, 15, 19, 21, 24, 26, 29, 33, 34, 36, 37, 41, 44, 48, 50, and 57 each coordinate a divalent metal cation. The tract at residues 30–61 (KKSCCSCCPVGCAKCSQGCVCKEASDKCSCCA) is alpha. Residue Ser58 is modified to Phosphoserine. 2 residues coordinate a divalent metal cation: Cys59 and Cys60.

It belongs to the metallothionein superfamily. Type 1 family.

Metallothioneins have a high content of cysteine residues that bind various heavy metals; these proteins are transcriptionally regulated by both heavy metals and glucocorticoids. The polypeptide is Metallothionein-2 (MT2) (Cricetulus griseus (Chinese hamster)).